The chain runs to 615 residues: 1-deoxy-D-xylulose-5-phosphate synthase (615 aa).

Residues H76 and 117 to 119 (GHS) each bind thiamine diphosphate. D148 is a Mg(2+) binding site. Thiamine diphosphate contacts are provided by residues 149 to 150 (GA), N177, Y284, and E365. N177 lines the Mg(2+) pocket.

This sequence belongs to the transketolase family. DXPS subfamily. In terms of assembly, homodimer. Mg(2+) serves as cofactor. Requires thiamine diphosphate as cofactor.

It carries out the reaction D-glyceraldehyde 3-phosphate + pyruvate + H(+) = 1-deoxy-D-xylulose 5-phosphate + CO2. Its pathway is metabolic intermediate biosynthesis; 1-deoxy-D-xylulose 5-phosphate biosynthesis; 1-deoxy-D-xylulose 5-phosphate from D-glyceraldehyde 3-phosphate and pyruvate: step 1/1. Catalyzes the acyloin condensation reaction between C atoms 2 and 3 of pyruvate and glyceraldehyde 3-phosphate to yield 1-deoxy-D-xylulose-5-phosphate (DXP). In Francisella tularensis subsp. mediasiatica (strain FSC147), this protein is 1-deoxy-D-xylulose-5-phosphate synthase.